A 415-amino-acid chain; its full sequence is Magnesium-chelatase subunit ChlI, chloroplastic (415 aa).

The N-terminal 67 residues, 1 to 67, are a transit peptide targeting the chloroplast; it reads MASAFSPATA…APSATQQEAK (67 aa). 2 cysteine pairs are disulfide-bonded: cysteine 93/cysteine 184 and cysteine 345/cysteine 387.

It belongs to the Mg-chelatase subunits D/I family. In terms of assembly, the magnesium chelatase complex is a heterotrimer consisting of subunits CHLI, CHLD and CHLH.

It is found in the plastid. The protein localises to the chloroplast. The enzyme catalyses protoporphyrin IX + Mg(2+) + ATP + H2O = Mg-protoporphyrin IX + ADP + phosphate + 3 H(+). The protein operates within porphyrin-containing compound metabolism; chlorophyll biosynthesis. Redox regulation; active in reducing conditions, inactive in oxidizing conditions. Thioredoxins f and m mediate the reversible reductive activation of oxidized CHLI. Functionally, involved in chlorophyll biosynthesis. Catalyzes the insertion of magnesium ion into protoporphyrin IX to yield Mg-protoporphyrin IX. The reaction takes place in two steps, with an ATP-dependent activation followed by an ATP-dependent chelation step. The polypeptide is Magnesium-chelatase subunit ChlI, chloroplastic (CHLI) (Oryza sativa subsp. japonica (Rice)).